The sequence spans 465 residues: Cysteine--tRNA ligase (465 aa).

Cysteine 30 is a binding site for Zn(2+). Positions 32–42 match the 'HIGH' region motif; that stretch reads ITVYDYCHVGH. Cysteine 214, histidine 239, and glutamate 243 together coordinate Zn(2+). Residues 271–275 carry the 'KMSKS' region motif; it reads KMSKS. Residue lysine 274 coordinates ATP.

This sequence belongs to the class-I aminoacyl-tRNA synthetase family. As to quaternary structure, monomer. It depends on Zn(2+) as a cofactor.

It localises to the cytoplasm. The enzyme catalyses tRNA(Cys) + L-cysteine + ATP = L-cysteinyl-tRNA(Cys) + AMP + diphosphate. The protein is Cysteine--tRNA ligase of Burkholderia ambifaria (strain MC40-6).